The sequence spans 222 residues: tRNA (guanine-N(1)-)-methyltransferase (222 aa).

S-adenosyl-L-methionine-binding positions include glycine 110 and 130–135 (IGDYVL).

This sequence belongs to the RNA methyltransferase TrmD family. As to quaternary structure, homodimer.

The protein localises to the cytoplasm. The enzyme catalyses guanosine(37) in tRNA + S-adenosyl-L-methionine = N(1)-methylguanosine(37) in tRNA + S-adenosyl-L-homocysteine + H(+). Specifically methylates guanosine-37 in various tRNAs. The polypeptide is tRNA (guanine-N(1)-)-methyltransferase (Protochlamydia amoebophila (strain UWE25)).